The chain runs to 289 residues: SAGA-associated factor 29kDa (289 aa).

The stretch at Ala9–Ser36 forms a coiled coil. The SGF29 C-terminal domain occupies Gly137 to Gly278. Histone H3K4me3 N-terminus binding stretches follow at residues Asp179–Asp181 and Gln225–Cys228. The histone H3K4me3 binding stretch occupies residues Phe249–Asp251.

The protein belongs to the SGF29 family. Component of the Spt-Ada-Gcn5 acetyltransferase (SAGA) complex consisting of wda/Taf5L, Saf6, Taf9, Taf10b, Taf12, Ada1, Spt3, Spt7, Spt20, Sf3b3, Sf3b5, Nipped-A/Tra1, a histone acetyltransferase (HAT) module made up of Gcn5, Ada2b (Isoform B), Ada3 and Sgf29, and a deubiquitinase (DUB) module made up of not/nonstop, Sgf11, Atxn7 and e(y)2. Component of the Chiffon histone acetyltransferase (CHAT) complex consisting of Ada3, Sgf29, Gcn5, chif/chiffon and Ada2b (Isoform A).

The protein resides in the nucleus. Its function is as follows. Component of both the SAGA and CHAT histone acetyltransferase complexes, which both predominantly acetylate histone H3. In Drosophila melanogaster (Fruit fly), this protein is SAGA-associated factor 29kDa.